Consider the following 200-residue polypeptide: MARFRGSNWKKSRRLGISLSGTGKELEKRPYAPGQHGPNQRKKLSEYGLQLREKQKLRYLYGMTERQFRNTFDIAGKQHGVHGENFMILLASRLDAVVYSLGLARTRRQARQLVGHGHVEVDGRRVDIPSYSLKPGQVITVREKSQNLDIIKESVEINNFVPEYLDFDADSLKGTFVRFPERSELPAEINEQLIVEYYSR.

Residues 92 to 155 (SRLDAVVYSL…QNLDIIKESV (64 aa)) form the S4 RNA-binding domain.

This sequence belongs to the universal ribosomal protein uS4 family. In terms of assembly, part of the 30S ribosomal subunit. Contacts protein S5. The interaction surface between S4 and S5 is involved in control of translational fidelity.

In terms of biological role, one of the primary rRNA binding proteins, it binds directly to 16S rRNA where it nucleates assembly of the body of the 30S subunit. With S5 and S12 plays an important role in translational accuracy. The sequence is that of Small ribosomal subunit protein uS4 from Staphylococcus haemolyticus (strain JCSC1435).